Reading from the N-terminus, the 871-residue chain is Transient receptor potential cation channel subfamily V member 4 (871 aa).

2 disordered regions span residues 1–68 (MADP…PNLR) and 110–143 (YGTY…PQPP). Residues 1 to 469 (MADPGDGPRA…RDKWRKFGAV (469 aa)) lie on the Cytoplasmic side of the membrane. The residue at position 110 (Y110) is a Phosphotyrosine. Over residues 116-129 (HPSDNKRWRRKVVE) the composition is skewed to basic and acidic residues. Residues K192, K197, N201, 236 to 239 (YRGQ), and R248 contribute to the ATP site. ANK repeat units follow at residues 237–266 (RGQT…DVHA) and 284–313 (FGEL…KKAD). Residue 249-251 (RCK) participates in a 1,2-diacyl-sn-glycero-3-phospho-(1D-myo-inositol-4,5-bisphosphate) binding. Y253 carries the post-translational modification Phosphotyrosine. Residues 296 to 299 (NQPH) and K344 each bind a 1,2-diacyl-sn-glycero-3-phospho-(1D-myo-inositol-4,5-bisphosphate). One copy of the ANK 3 repeat lies at 369–398 (DGLSPLMMAAKTGKIGVFQHIIRREVTDED). A helical transmembrane segment spans residues 470 to 490 (SFYINVVSYLCAMVIFTLTAY). Residues 491–507 (YQPLEGTPPYPYRTTVD) lie on the Extracellular side of the membrane. Residues 508–534 (YLRLAGEVITLLTGVLFFFTSIKDLFM) form a helical membrane-spanning segment. Residues 535–547 (KKCPGVNSLFVDG) lie on the Cytoplasmic side of the membrane. A helical membrane pass occupies residues 548 to 568 (SFQLLYFIYSVLVVVSAALYL). Residues 569–572 (AGIE) lie on the Extracellular side of the membrane. Residues 573–593 (AYLAVMVFALVLGWMNALYFT) traverse the membrane as a helical segment. Over 594–608 (RGLKLTGTYSIMIQK) the chain is Cytoplasmic. Residues 609 to 636 (ILFKDLFRFLLVYLLFMIGYASALVTLL) traverse the membrane as a helical segment. Topologically, residues 637–665 (NPCTNMKVCNEDQSNCTVPSYPACRDSET) are extracellular. Positions 666-685 (FSAFLLDLFKLTIGMGDLEM) form an intramembrane region, pore-forming. The Selectivity filter motif lies at 679 to 682 (GMGD). D682 contacts Ca(2+). Residues 686-693 (LSSAKYPV) lie on the Extracellular side of the membrane. A helical membrane pass occupies residues 694–722 (VFILLLVTYIILTFVLLLNMLIALMGETV). The Cytoplasmic portion of the chain corresponds to 723-871 (GQVSKESKHI…PKWRAEDAPL (149 aa)). Y805 is modified (phosphotyrosine). An interaction with calmodulin and ITPR3 region spans residues 812–831 (HTMGRLRRDRWSSVVPRVVE). At S824 the chain carries Phosphoserine.

The protein belongs to the transient receptor (TC 1.A.4) family. TrpV subfamily. TRPV4 sub-subfamily. As to quaternary structure, homotetramer. Interacts with calmodulin. Interacts with MAP7 and Src family Tyr protein kinases LYN, SRC, FYN, HCK, LCK and YES. Interacts with CTNNB1. The TRPV4 and CTNNB1 complex can interact with CDH1. Part of a complex containing MLC1, AQP4, HEPACAM and ATP1B1. Interacts with PACSIN1, PACSIN2 and PACSIN3 (via SH3 domain). Interacts with ITPR3. Interacts with AQP5; the interaction is probably indirect and regulates TRPV4 activation by hypotonicity. Interacts with ANO1. Interacts (via C-terminus) with PKD2 (via C-terminus). Interacts with DDX3X; this interaction is decreased when the channel is activated. Post-translationally, N-glycosylated. Expressed lung, spleen, kidney, testis, fat, and at very low levels in trigeminal ganglia.

The protein localises to the cell membrane. The protein resides in the apical cell membrane. It localises to the cell junction. It is found in the adherens junction. Its subcellular location is the cell projection. The protein localises to the cilium. It carries out the reaction Ca(2+)(in) = Ca(2+)(out). Non-selective calcium permeant cation channel involved in osmotic sensitivity and mechanosensitivity. Activation by exposure to hypotonicity within the physiological range exhibits an outward rectification. Also activated by heat, low pH, citrate and phorbol esters. Increase of intracellular Ca(2+) potentiates currents. Channel activity seems to be regulated by a calmodulin-dependent mechanism with a negative feedback mechanism. Acts as a regulator of intracellular Ca(2+) in synoviocytes. Plays an obligatory role as a molecular component in the nonselective cation channel activation induced by 4-alpha-phorbol 12,13-didecanoate and hypotonic stimulation in synoviocytes and also regulates production of IL-8. Together with PKD2, forms mechano- and thermosensitive channels in cilium. Promotes cell-cell junction formation in skin keratinocytes and plays an important role in the formation and/or maintenance of functional intercellular barriers. Negatively regulates expression of PPARGC1A, UCP1, oxidative metabolism and respiration in adipocytes. Regulates expression of chemokines and cytokines related to pro-inflammatory pathway in adipocytes. Together with AQP5, controls regulatory volume decrease in salivary epithelial cells. Required for normal development and maintenance of bone and cartilage. In its inactive state, may sequester DDX3X at the plasma membrane. When activated, the interaction between both proteins is affected and DDX3X relocalizes to the nucleus. In neurons of the central nervous system, could play a role in triggering voluntary water intake in response to increased sodium concentration in body fluid. The polypeptide is Transient receptor potential cation channel subfamily V member 4 (Trpv4) (Rattus norvegicus (Rat)).